The following is a 322-amino-acid chain: Homoserine kinase (322 aa).

106-116 (ALSSGMGGSAA) serves as a coordination point for ATP.

It belongs to the GHMP kinase family. Homoserine kinase subfamily.

It localises to the cytoplasm. It catalyses the reaction L-homoserine + ATP = O-phospho-L-homoserine + ADP + H(+). The protein operates within amino-acid biosynthesis; L-threonine biosynthesis; L-threonine from L-aspartate: step 4/5. Catalyzes the ATP-dependent phosphorylation of L-homoserine to L-homoserine phosphate. The protein is Homoserine kinase of Xanthomonas campestris pv. campestris (strain B100).